We begin with the raw amino-acid sequence, 454 residues long: MMKTLSPTVITLPWRPDAAEHYFAPVNHLPWAMLLHSGDAIHPYNRFDILVADPVTTLTTRAQETTVCTARTTTVTLDDPLHVLQTQLEALPFHPQPDPDLPFQGGALGLFGYDLGRRFEILPDTAARDIALPDMAIGLYDWALIVDHQKQVVSLISYHDADARYRWLTSQRAPTRTPFRLTSAWQSNMTRCEYGEKFRQVQAWLHSGDCYQVNLSQRFQASYEGDEWQAFERLNRANRAPFSAFLRLHDGAILSLSPERFIQLENGHIQTRPIKGTLPRLNDPQADRQQAQKLANSMKDRAENLMIVDLMRNDIGRVAVPGSVKVPELFVVEPFPAVHHLVSTITARLPDSLHATDLLRAAFPGGSITGAPKVRAMEIIDELEPQRRNAWCGSIGYLSFCGKMDTSITIRTVTATQGQLYCSAGGGIVADSNEEAEYQETFDKVNRILHPLEN.

L-tryptophan contacts are provided by residues serine 37, 44 to 47, and 241 to 243; these read YNRF and PFS. Glutamate 259 serves as the catalytic Proton donor. Catalysis depends on lysine 275, which acts as the N6-(4-deoxychorismate)-lysine intermediate.

This sequence belongs to the anthranilate synthase component I family. Monomer. Heterodimer consisting of two non-identical subunits: a glutamine amidotransferase subunit (PabA) and a aminodeoxychorismate synthase subunit (PabB). It depends on Mg(2+) as a cofactor.

The enzyme catalyses chorismate + L-glutamine = 4-amino-4-deoxychorismate + L-glutamate. It participates in cofactor biosynthesis; tetrahydrofolate biosynthesis; 4-aminobenzoate from chorismate: step 1/2. Functionally, part of a heterodimeric complex that catalyzes the two-step biosynthesis of 4-amino-4-deoxychorismate (ADC), a precursor of p-aminobenzoate (PABA) and tetrahydrofolate. In the first step, a glutamine amidotransferase (PabA) generates ammonia as a substrate that, along with chorismate, is used in the second step, catalyzed by aminodeoxychorismate synthase (PabB) to produce ADC. In Salmonella typhimurium (strain LT2 / SGSC1412 / ATCC 700720), this protein is Aminodeoxychorismate synthase component 1 (pabB).